Reading from the N-terminus, the 221-residue chain is Endonuclease V (221 aa).

Mg(2+) contacts are provided by D44 and D112.

It belongs to the endonuclease V family. Mg(2+) serves as cofactor.

Its subcellular location is the cytoplasm. The enzyme catalyses Endonucleolytic cleavage at apurinic or apyrimidinic sites to products with a 5'-phosphate.. Functionally, DNA repair enzyme involved in the repair of deaminated bases. Selectively cleaves double-stranded DNA at the second phosphodiester bond 3' to a deoxyinosine leaving behind the intact lesion on the nicked DNA. The protein is Endonuclease V of Trichormus variabilis (strain ATCC 29413 / PCC 7937) (Anabaena variabilis).